Reading from the N-terminus, the 213-residue chain is Motile sperm domain-containing protein 1 (213 aa).

The 128-residue stretch at 16–143 (PVFVFPTELI…KEHLTESLFF (128 aa)) folds into the MSP domain. The next 2 membrane-spanning stretches (helical) occupy residues 159-179 (SLLTVFLGVVCIAALMLPTLG) and 191-211 (LSVNQKLVAAYILGLITMAIL). The short motif at 205 to 208 (LITM) is the Nuclear export signal element.

It is found in the endoplasmic reticulum membrane. Its subcellular location is the golgi apparatus membrane. Plays a role in differentiation and/or proliferation of mesenchymal stem cells. Proposed to be involved in epithelial-to-mesenchymal transition (EMT). However, another study suggests that it is not required for EMT or stem cell self-renewal and acts during later stages of differentiation. The chain is Motile sperm domain-containing protein 1 (MOSPD1) from Homo sapiens (Human).